The chain runs to 117 residues: Large ribosomal subunit protein bL20 (117 aa).

The protein belongs to the bacterial ribosomal protein bL20 family.

Binds directly to 23S ribosomal RNA and is necessary for the in vitro assembly process of the 50S ribosomal subunit. It is not involved in the protein synthesizing functions of that subunit. The sequence is that of Large ribosomal subunit protein bL20 from Rickettsia akari (strain Hartford).